The following is a 230-amino-acid chain: Thiamine-triphosphatase (230 aa).

Alanine 2 is modified (N-acetylalanine). The CYTH domain maps to 5–201 (LIEVERKFLP…AKLIVYLQRF (197 aa)). 2 residues coordinate Mg(2+): glutamate 7 and glutamate 9. Residues lysine 11, arginine 55, arginine 57, lysine 65, and arginine 125 each coordinate substrate. The Mg(2+) site is built by aspartate 145, glutamate 157, and glutamate 159. Residue glutamate 157 coordinates substrate. Residue lysine 193 coordinates substrate.

It belongs to the ThTPase family. Monomer. The cofactor is Mg(2+). Widely expressed but at a low level.

The protein localises to the cytoplasm. It carries out the reaction thiamine triphosphate + H2O = thiamine diphosphate + phosphate + H(+). Hydrolase highly specific for thiamine triphosphate (ThTP). The polypeptide is Thiamine-triphosphatase (THTPA) (Homo sapiens (Human)).